The primary structure comprises 21 residues: Ocellatin-2 (21 aa).

An Isoleucine amide modification is found at Ile-21.

In terms of tissue distribution, expressed by the skin dorsal glands.

It is found in the secreted. In terms of biological role, has hemolytic activity against human erythrocytes and antibacterial activity against the Gram-negative bacterium E.coli. The polypeptide is Ocellatin-2 (Leptodactylus ocellatus (Argus frog)).